The chain runs to 198 residues: Recombination protein RecR (198 aa).

The C4-type zinc-finger motif lies at C57–C72. Residues S80–P174 enclose the Toprim domain.

This sequence belongs to the RecR family.

Functionally, may play a role in DNA repair. It seems to be involved in an RecBC-independent recombinational process of DNA repair. It may act with RecF and RecO. In Pseudomonas paraeruginosa (strain DSM 24068 / PA7) (Pseudomonas aeruginosa (strain PA7)), this protein is Recombination protein RecR.